The following is a 199-amino-acid chain: MEKRELKTFVPKFDKIPWLSEASVVNKPLILSIPRRYRSSIVLTSYKKDMYLPHLLEDSDFISKARKNEHENLLPRNKQLCSTCRGYQEMKTLQPKIFKIPDHREPSPQNSVNHGEVSLHSQEQQLHACNDIPTESIRYRLPILGPRTAVFHRLLSDAYKTPQDTQYCAFPKKKGMSKTVKQITTPHAALYPCRSYSAI.

This is an uncharacterized protein from Rattus norvegicus (Rat).